A 1009-amino-acid polypeptide reads, in one-letter code: Delphilin (1009 aa).

Disordered stretches follow at residues 28–82 (CRSK…SNTM), 170–193 (EGPVDYPQSDSEPEETPSAPRSRS), 322–369 (ASPD…SRDT), 414–635 (ELSS…SDNN), and 990–1009 (SETQGTENPKSPRIASPLAW). Residues 44–53 (RSQDHHERPQ) are compositionally biased toward basic and acidic residues. Positions 95–172 (TIRVYRGKKS…MPSLVVEEGP (78 aa)) constitute a PDZ domain. The segment covering 322–332 (ASPDSVDSNPY) has biased composition (polar residues). Low complexity-rich tracts occupy residues 334-352 (SLDSPPASPLPSDELSPLP) and 427-439 (DDSTSVSYSSGSD). 3 stretches are compositionally biased toward pro residues: residues 441-455 (IPPPPQSPPPPPPPL), 462-477 (SPLPITPEHLPQPPPA), and 484-493 (IAPPPPPPRP). The segment covering 521 to 535 (SSPQPSSQPILQLHQ) has biased composition (low complexity). A compositionally biased stretch (polar residues) spans 557–602 (AQHTRLQHPSQSIYQSQQTTVPRTSPSLTKQKSLHSQPSQQSFEGT). Positions 607-628 (VPPPPPPPLPPPCDPPPLPKPS) are enriched in pro residues. One can recognise an FH2 domain in the interval 629–1009 (PKASDNNHMS…SPRIASPLAW (381 aa)).

The protein localises to the postsynaptic cell membrane. Postsynaptic scaffolding protein. The protein is Delphilin (grid2ip) of Danio rerio (Zebrafish).